We begin with the raw amino-acid sequence, 186 residues long: HGPRTase-like protein 3 (186 aa).

Belongs to the purine/pyrimidine phosphoribosyltransferase family. Archaeal HPRT subfamily.

Its function is as follows. May catalyze a purine salvage reaction, the substrate is unknown. This is HGPRTase-like protein 3 from Haloterrigena turkmenica (strain ATCC 51198 / DSM 5511 / JCM 9101 / NCIMB 13204 / VKM B-1734 / 4k) (Halococcus turkmenicus).